The sequence spans 428 residues: Aspartate--tRNA(Asp) ligase (428 aa).

Position 170 (Glu170) interacts with L-aspartate. The segment at 192–195 is aspartate; that stretch reads QLYK. Arg213 contributes to the L-aspartate binding site. ATP-binding positions include 213–215 and Glu351; that span reads RAE. Mg(2+) is bound by residues Glu351 and Ser354. L-aspartate contacts are provided by Ser354 and Arg358. 399–402 lines the ATP pocket; the sequence is GFNR.

This sequence belongs to the class-II aminoacyl-tRNA synthetase family. Type 2 subfamily. As to quaternary structure, homodimer. Mg(2+) is required as a cofactor.

The protein resides in the cytoplasm. The catalysed reaction is tRNA(Asp) + L-aspartate + ATP = L-aspartyl-tRNA(Asp) + AMP + diphosphate. Its function is as follows. Catalyzes the attachment of L-aspartate to tRNA(Asp) in a two-step reaction: L-aspartate is first activated by ATP to form Asp-AMP and then transferred to the acceptor end of tRNA(Asp). The polypeptide is Aspartate--tRNA(Asp) ligase (Pyrobaculum aerophilum (strain ATCC 51768 / DSM 7523 / JCM 9630 / CIP 104966 / NBRC 100827 / IM2)).